Consider the following 101-residue polypeptide: MELAVIGKSEFVTGFRLAGIRKVYEIVDVPSSESAVKSVLEDKSIGILVMHNDDISNLPEILRRNLNESVQPTVVALGGTGEGSMSLRDKIKQAVGVDLWK.

Belongs to the V-ATPase F subunit family. Has multiple subunits with at least A(3), B(3), C, D, E, F, H, I and proteolipid K(x).

The protein localises to the cell membrane. Functionally, component of the A-type ATP synthase that produces ATP from ADP in the presence of a proton gradient across the membrane. In Methanosarcina acetivorans (strain ATCC 35395 / DSM 2834 / JCM 12185 / C2A), this protein is A-type ATP synthase subunit F.